The following is a 289-amino-acid chain: Probable endonuclease 4 (289 aa).

Zn(2+) contacts are provided by H75, H115, E153, D187, H190, H224, D237, H239, and E269.

This sequence belongs to the AP endonuclease 2 family. It depends on Zn(2+) as a cofactor.

The enzyme catalyses Endonucleolytic cleavage to 5'-phosphooligonucleotide end-products.. Functionally, endonuclease IV plays a role in DNA repair. It cleaves phosphodiester bonds at apurinic or apyrimidinic (AP) sites, generating a 3'-hydroxyl group and a 5'-terminal sugar phosphate. This Chlamydia caviae (strain ATCC VR-813 / DSM 19441 / 03DC25 / GPIC) (Chlamydophila caviae) protein is Probable endonuclease 4.